We begin with the raw amino-acid sequence, 863 residues long: uncharacterized protein (863 aa).

An N-terminal signal peptide occupies residues 1-29; that stretch reads MHQSGSVSLCRSAISVLVATALYSPIALA. In terms of domain architecture, Autotransporter spans 595–863; the sequence is GVSYDTAMWS…NTQAGVVWTF (269 aa).

Its subcellular location is the cell outer membrane. This is an uncharacterized protein from Escherichia coli (strain K12).